The chain runs to 66 residues: UPF0434 protein Nwi_0075 (66 aa).

It belongs to the UPF0434 family.

The sequence is that of UPF0434 protein Nwi_0075 from Nitrobacter winogradskyi (strain ATCC 25391 / DSM 10237 / CIP 104748 / NCIMB 11846 / Nb-255).